A 265-amino-acid chain; its full sequence is Undecaprenyl-diphosphatase 1 (265 aa).

7 helical membrane-spanning segments follow: residues 4-24 (IITAFILGIVEGLAEFLPISS), 42-62 (AKTFEIVIQLGAILAIAILYH), 84-104 (FHVFLGVFPAVVAGLLLHDII), 108-128 (LFQPYTVVIGLVAGAILMIFA), 184-204 (SEFSFLIALPVMVGATGLDLL), 217-237 (MFAVGFITSFIVAMLAVVTFL), and 245-265 (LKPFAYYRILLAILFTVFVLL).

This sequence belongs to the UppP family.

Its subcellular location is the cell membrane. It carries out the reaction di-trans,octa-cis-undecaprenyl diphosphate + H2O = di-trans,octa-cis-undecaprenyl phosphate + phosphate + H(+). In terms of biological role, catalyzes the dephosphorylation of undecaprenyl diphosphate (UPP). Confers resistance to bacitracin. The chain is Undecaprenyl-diphosphatase 1 from Bacillus thuringiensis subsp. konkukian (strain 97-27).